The primary structure comprises 77 residues: Conotoxin King-Kong 1 (77 aa).

The first 22 residues, 1–22 (MKLTCMMIVAVLFLTAWTFATA), serve as a signal peptide directing secretion. A propeptide spanning residues 23 to 49 (DDSSNGLENLFSKAHHEMKNPEASKLN) is cleaved from the precursor. 3 disulfide bridges follow: cysteine 52–cysteine 67, cysteine 59–cysteine 71, and cysteine 66–cysteine 76. Residue methionine 61 is modified to Methionine sulfoxide; partial.

It belongs to the conotoxin O1 superfamily. Expressed by the venom duct.

It is found in the secreted. The sequence is that of Conotoxin King-Kong 1 from Conus textile (Cloth-of-gold cone).